The sequence spans 212 residues: uncharacterized protein (212 aa).

This is an uncharacterized protein from Acanthamoeba polyphaga (Amoeba).